The chain runs to 738 residues: NADH dehydrogenase [ubiquinone] iron-sulfur protein 1, mitochondrial (738 aa).

Residues 1–27 constitute a mitochondrion transit peptide; the sequence is MGLGLLASRALRSSRIIRNSTRTIVST. The region spanning 66 to 144 is the 2Fe-2S ferredoxin-type domain; that stretch reads DVIEVFVDGY…GMKIKTDTPI (79 aa). Residues Cys-100, Cys-111, Cys-114, and Cys-128 each coordinate [2Fe-2S] cluster. The 40-residue stretch at 144–183 folds into the 4Fe-4S His(Cys)3-ligated-type domain; it reads IAKKAREGVMEFLLMNHPLDCPICDQGGECDLQDQSMAFG. 8 residues coordinate [4Fe-4S] cluster: His-160, Cys-164, Cys-167, Cys-173, Cys-212, Cys-215, Cys-218, and Cys-262. The 57-residue stretch at 281–337 folds into the 4Fe-4S Mo/W bis-MGD-type domain; that stretch reads LKGTESIDVTDAVGSNIRIDSRGPEVMRVVPRLNEDINEEWISDKTRFFYDGLKRQR.

Belongs to the complex I 75 kDa subunit family. Complex I is composed of about 45 different subunits. This is a component of the iron-sulfur (IP) fragment of the enzyme. It depends on [2Fe-2S] cluster as a cofactor. Requires [4Fe-4S] cluster as cofactor.

It is found in the mitochondrion inner membrane. The enzyme catalyses a ubiquinone + NADH + 5 H(+)(in) = a ubiquinol + NAD(+) + 4 H(+)(out). Core subunit of the mitochondrial membrane respiratory chain NADH dehydrogenase (Complex I) that is believed to belong to the minimal assembly required for catalysis. Complex I functions in the transfer of electrons from NADH to the respiratory chain. The immediate electron acceptor for the enzyme is believed to be ubiquinone. This is the largest subunit of complex I and it is a component of the iron-sulfur (IP) fragment of the enzyme. It may form part of the active site crevice where NADH is oxidized. In Solanum tuberosum (Potato), this protein is NADH dehydrogenase [ubiquinone] iron-sulfur protein 1, mitochondrial.